Consider the following 745-residue polypeptide: Arf-GAP with coiled-coil, ANK repeat and PH domain-containing protein 1 (745 aa).

One can recognise a BAR domain in the interval 1–226 (MTVKLDFEEC…RKELGGQLHQ (226 aa)). Residues 1 to 382 (MTVKLDFEEC…RGLGQGSGHL (382 aa)) form a required for formation of endosomal tubules when overexpressed with PIP5K1C region. A PH domain is found at 265-360 (GLVMEGHLFK…WVSAVQSSIA (96 aa)). One can recognise an Arf-GAP domain in the interval 405–527 (GHVAAQVQSV…KFLTKLPEIR (123 aa)). Residues 405–745 (GHVAAQVQSV…SRRSHDLHTL (341 aa)) are required for interaction with GULP1. The C4-type zinc finger occupies 420-443 (CCDCREPAPEWASINLGVTLCIQC). A 3'-nitrotyrosine modification is found at Y485. The interval 525-567 (EIRGRRGGRGPPRGHPPVPPKPGLIRPKPGSFRSKPEPPSEDL) is prevents interaction with ITGB1 when S-554 is not phosphorylated. The segment at 525 to 569 (EIRGRRGGRGPPRGHPPVPPKPGLIRPKPGSFRSKPEPPSEDLQS) is disordered. The segment covering 537–546 (RGHPPVPPKP) has biased composition (pro residues). S555 is modified (phosphoserine; by PKB). 3 ANK repeats span residues 607–640 (ENAT…NVNQ), 644–673 (QGRG…DLGV), and 677–707 (EGRD…EADA).

As to quaternary structure, banana-shaped homodimer laterally assembling into tetramers, the tetramers further pack helically onto the membrane. Interacts with GTP-bound ARF6. Interacts with third cytoplasmic loop of SLC2A4/GLUT4. Interacts with CLTC. Interacts with GULP1. Forms a complex with GDP-bound ARF6 and GULP1. Interacts with ITGB1; required for ITGB1 recycling. In terms of processing, phosphorylation at Ser-555 by PKB is required for interaction with ITGB1, export of ITGB1 from recycling endosomes to the cell surface and ITGB1-dependent cell migration.

Its subcellular location is the recycling endosome membrane. GAP activity stimulated by phosphatidylinositol 4,5-bisphosphate (PIP2) and phosphatidic acid. Its function is as follows. GTPase-activating protein (GAP) for ADP ribosylation factor 6 (ARF6) required for clathrin-dependent export of proteins from recycling endosomes to trans-Golgi network and cell surface. Required for regulated export of ITGB1 from recycling endosomes to the cell surface and ITGB1-dependent cell migration. The protein is Arf-GAP with coiled-coil, ANK repeat and PH domain-containing protein 1 (ACAP1) of Bos taurus (Bovine).